A 404-amino-acid polypeptide reads, in one-letter code: Translation initiation factor eIF2B subunit gamma (404 aa).

It belongs to the eIF-2B gamma/epsilon subunits family. In terms of assembly, component of the translation initiation factor 2B (eIF2B) complex which is a heterodecamer of two sets of five different subunits: alpha, beta, gamma, delta and epsilon. Subunits alpha, beta and delta comprise a regulatory subcomplex and subunits epsilon and gamma comprise a catalytic subcomplex. Within the complex, the hexameric regulatory complex resides at the center, with the two heterodimeric catalytic subcomplexes bound on opposite sides.

It localises to the cytoplasm. Its subcellular location is the cytosol. Functionally, acts as a component of the translation initiation factor 2B (eIF2B) complex, which catalyzes the exchange of GDP for GTP on the eukaryotic initiation factor 2 (eIF2) complex gamma subunit. Its guanine nucleotide exchange factor activity is repressed when bound to eIF2 complex phosphorylated on the alpha subunit, thereby limiting the amount of methionyl-initiator methionine tRNA available to the ribosome and consequently global translation is repressed. The polypeptide is Translation initiation factor eIF2B subunit gamma (Caenorhabditis elegans).